The chain runs to 634 residues: Chaperone protein DnaK 2 (634 aa).

Residue T197 is modified to Phosphothreonine; by autocatalysis. The segment covering 600–620 (ASAEASANAQAGPSSSSSSSS) has biased composition (low complexity). Residues 600–634 (ASAEASANAQAGPSSSSSSSSGDDDVIDAEFSESK) are disordered. Acidic residues predominate over residues 621–634 (GDDDVIDAEFSESK).

The protein belongs to the heat shock protein 70 family.

Acts as a chaperone. The polypeptide is Chaperone protein DnaK 2 (Synechococcus sp. (strain ATCC 27144 / PCC 6301 / SAUG 1402/1) (Anacystis nidulans)).